The following is a 548-amino-acid chain: MPVPGDDMGETPLTRTPIPMPAYFSQAEQSFSLKKRGRSLCYTLPPRPPVKSALPVSRIFPNKQRSWSQPRPQSVSFRSPQNKTPASKLYDQSKGDTFFKQCFKSICKLGRGSFGEVYKVQSLEDGCFYAVKRSVSPFRGESDRQRKLQEVRKHERVGEHPNCLRFVRAWEEKRMLYLQTELCAGSLQQHSEEFAGSLPPRRVWNITCDLLHGLKHLHDRNLLHLDIKPANVFISFSGVCKLGDFGLMVELDGTEGSGEAQEGDPRYMAPELLDGIFSKAADVFSLGMSLLEVACNMELPKGGDGWQQLRQGHLPTEFTSDLPPDFLKVLSAMLEPDYRRRATVDWLLSLPAIRNAERWRMVTLAQERTLGKIIAVYQFIVWLLSFVFQWLNRPVIGFLHYCGLRALPRSPPCSPFPNHLGESSFSSDWDDESLGDDVFEVPPSPLATHRNLTYHGQELIGRHSPDLLSRPSLGSTSTPRNLSPEFSMRKRSALPLTPNVSRISQDSTGKSRSPSTSHSSSGFVDAEVQRTLFLPRNLLGMFDDATEQ.

The tract at residues 61 to 89 (PNKQRSWSQPRPQSVSFRSPQNKTPASKL) is disordered. Positions 63–85 (KQRSWSQPRPQSVSFRSPQNKTP) are enriched in polar residues. Residues 103 to 353 (FKSICKLGRG…VDWLLSLPAI (251 aa)) form the Protein kinase domain. Residues 109 to 117 (LGRGSFGEV) and Lys-132 contribute to the ATP site. Asp-226 (proton acceptor) is an active-site residue. Mg(2+) is bound by residues Asn-231, Asp-244, and Gly-246. The Membrane-association motif motif lies at 376 to 392 (VYQFIVWLLSFVFQWLN). Residues 464–523 (SPDLLSRPSLGSTSTPRNLSPEFSMRKRSALPLTPNVSRISQDSTGKSRSPSTSHSSSGF) form a disordered region. Residues 472–481 (SLGSTSTPRN) are compositionally biased toward polar residues. Thr-478 is subject to Phosphothreonine; by CDK1. Residues 507-521 (STGKSRSPSTSHSSS) are compositionally biased toward low complexity.

Belongs to the protein kinase superfamily. Ser/Thr protein kinase family. WEE1 subfamily. As to quaternary structure, interacts with CDC2-CCNB1 complex. Interacts with Mos during oocyte maturation. In terms of processing, autophosphorylated. Phosphorylated on undefined residues by RSK2 and Mos kinases. Phosphorylation at Thr-478 by cdk1 creates a docking site for plk1/plx1, leading to subsequent phosphorylation by plk1/plk1 and inhibition of the protein kinase activity kinase activity.

The protein localises to the endoplasmic reticulum membrane. The protein resides in the golgi apparatus membrane. The catalysed reaction is L-seryl-[protein] + ATP = O-phospho-L-seryl-[protein] + ADP + H(+). It catalyses the reaction L-threonyl-[protein] + ATP = O-phospho-L-threonyl-[protein] + ADP + H(+). With respect to regulation, negatively regulated by hyperphosphorylation during mitosis. The plk1/plk1 protein kinase may be required for mitotic phosphorylation. Inactivated during oocyte maturation by phosphorylation by RSK2 and Mos kinase. Functionally, acts as a negative regulator of entry into mitosis (G2 to M transition) by phosphorylation of the CDK1 kinase specifically when CDK1 is complexed to cyclins. Mediates phosphorylation of CDK1 predominantly on 'Thr-14'. Also involved in Golgi fragmentation. May be involved in phosphorylation of CDK1 on 'Tyr-15' to a lesser degree, however tyrosine kinase activity is unclear and may be indirect. The protein is Membrane-associated tyrosine- and threonine-specific cdc2-inhibitory kinase (pkmyt1) of Xenopus laevis (African clawed frog).